Here is a 156-residue protein sequence, read N- to C-terminus: Methylated-DNA--protein-cysteine methyltransferase (156 aa).

Cys-120 serves as the catalytic Nucleophile; methyl group acceptor.

The protein belongs to the MGMT family.

It is found in the cytoplasm. It catalyses the reaction a 6-O-methyl-2'-deoxyguanosine in DNA + L-cysteinyl-[protein] = S-methyl-L-cysteinyl-[protein] + a 2'-deoxyguanosine in DNA. The enzyme catalyses a 4-O-methyl-thymidine in DNA + L-cysteinyl-[protein] = a thymidine in DNA + S-methyl-L-cysteinyl-[protein]. Involved in the cellular defense against the biological effects of O6-methylguanine (O6-MeG) and O4-methylthymine (O4-MeT) in DNA. Repairs the methylated nucleobase in DNA by stoichiometrically transferring the methyl group to a cysteine residue in the enzyme. This is a suicide reaction: the enzyme is irreversibly inactivated. The polypeptide is Methylated-DNA--protein-cysteine methyltransferase (Sulfurisphaera tokodaii (strain DSM 16993 / JCM 10545 / NBRC 100140 / 7) (Sulfolobus tokodaii)).